Consider the following 428-residue polypeptide: Enolase (428 aa).

Residue glutamine 164 coordinates (2R)-2-phosphoglycerate. Glutamate 206 functions as the Proton donor in the catalytic mechanism. Mg(2+) contacts are provided by aspartate 243, glutamate 286, and aspartate 313. (2R)-2-phosphoglycerate contacts are provided by lysine 338, arginine 367, serine 368, and lysine 389. Lysine 338 functions as the Proton acceptor in the catalytic mechanism.

This sequence belongs to the enolase family. It depends on Mg(2+) as a cofactor.

The protein resides in the cytoplasm. Its subcellular location is the secreted. It localises to the cell surface. It carries out the reaction (2R)-2-phosphoglycerate = phosphoenolpyruvate + H2O. It functions in the pathway carbohydrate degradation; glycolysis; pyruvate from D-glyceraldehyde 3-phosphate: step 4/5. In terms of biological role, catalyzes the reversible conversion of 2-phosphoglycerate (2-PG) into phosphoenolpyruvate (PEP). It is essential for the degradation of carbohydrates via glycolysis. This Dehalococcoides mccartyi (strain ATCC BAA-2100 / JCM 16839 / KCTC 5957 / BAV1) protein is Enolase.